The primary structure comprises 806 residues: Zygotic DNA replication licensing factor mcm3 (806 aa).

Residues 295-502 (VFEQLSRSLA…HDREISDHVL (208 aa)) enclose the MCM domain. Position 345–352 (345–352 (GDPSVAKS)) interacts with ATP. The Arginine finger motif lies at 477–480 (SRFD). The disordered stretch occupies residues 662 to 738 (KKRRRREGES…TDSSAKPGLS (77 aa)). The segment covering 693–702 (AQDGESHDPY) has biased composition (basic and acidic residues).

Belongs to the MCM family. In terms of assembly, component of the mcm2-7 complex (RLF-M). The complex forms a toroidal hexameric ring with the proposed subunit order mcm2-mcm6-mcm4-mcm7-mcm3-mcm5. Begins to associate with zmcm6 into mcm complexes at the neurula stage. Component of the CMG helicase complex, composed of the mcm2-7 complex, the GINS complex and cdc45.

Its subcellular location is the nucleus. The protein resides in the chromosome. The enzyme catalyses ATP + H2O = ADP + phosphate + H(+). Functionally, acts as a component of the mcm2-7 complex (mcm complex) which is the putative replicative helicase essential for 'once per cell cycle' DNA replication initiation and elongation in eukaryotic cells. The active ATPase sites in the mcm2-7 ring are formed through the interaction surfaces of two neighboring subunits such that a critical structure of a conserved arginine finger motif is provided in trans relative to the ATP-binding site of the Walker A box of the adjacent subunit. The six ATPase active sites, however, are likely to contribute differentially to the complex helicase activity. The existence of maternal and zygotic forms of mcm3 and mcm6 suggests that specific forms of mcm2-7 complexes may be used during different stages of development. This is Zygotic DNA replication licensing factor mcm3 from Xenopus laevis (African clawed frog).